We begin with the raw amino-acid sequence, 195 residues long: Probable nicotinate-nucleotide adenylyltransferase (195 aa).

This sequence belongs to the NadD family.

The enzyme catalyses nicotinate beta-D-ribonucleotide + ATP + H(+) = deamido-NAD(+) + diphosphate. The protein operates within cofactor biosynthesis; NAD(+) biosynthesis; deamido-NAD(+) from nicotinate D-ribonucleotide: step 1/1. In terms of biological role, catalyzes the reversible adenylation of nicotinate mononucleotide (NaMN) to nicotinic acid adenine dinucleotide (NaAD). This Salinibacter ruber (strain DSM 13855 / M31) protein is Probable nicotinate-nucleotide adenylyltransferase.